The primary structure comprises 124 residues: Glycine cleavage system H protein (124 aa).

The 83-residue stretch at 22–104 (KAKVGITDFA…YENGYLFIIE (83 aa)) folds into the Lipoyl-binding domain. N6-lipoyllysine is present on lysine 63.

The protein belongs to the GcvH family. As to quaternary structure, the glycine cleavage system is composed of four proteins: P, T, L and H. Requires (R)-lipoate as cofactor.

Its function is as follows. The glycine cleavage system catalyzes the degradation of glycine. The H protein shuttles the methylamine group of glycine from the P protein to the T protein. The chain is Glycine cleavage system H protein from Endomicrobium trichonymphae.